Consider the following 102-residue polypeptide: Large ribosomal subunit protein bL21 (102 aa).

Over residues 79–91 (RKDSKRKKGHRQP) the composition is skewed to basic residues. Positions 79 to 102 (RKDSKRKKGHRQPYTKLTIDKINA) are disordered.

The protein belongs to the bacterial ribosomal protein bL21 family. Part of the 50S ribosomal subunit. Contacts protein L20.

This protein binds to 23S rRNA in the presence of protein L20. The protein is Large ribosomal subunit protein bL21 of Staphylococcus saprophyticus subsp. saprophyticus (strain ATCC 15305 / DSM 20229 / NCIMB 8711 / NCTC 7292 / S-41).